A 576-amino-acid chain; its full sequence is S-layer protein (576 aa).

The signal sequence occupies residues 1–23 (KKIGAIAAGSAMVASALATGVFA). N-linked (GlcNAc...) asparagine glycosylation is found at Asn-102 and Asn-132.

This sequence belongs to the Mj S-layer protein family. In terms of processing, N-linked glycans consist of the 779 Da trisaccharide beta-ManNAc(Thr)-(1-4)-beta-GlcNAc3NAcA-(1-3)-beta-GlcNAc.

The protein resides in the secreted. It localises to the cell wall. It is found in the S-layer. In terms of biological role, S-layer protein. The S-layer is a paracrystalline mono-layered assembly of proteins which coat the surface of the cell. This Methanococcus voltae protein is S-layer protein (sla).